The primary structure comprises 190 residues: MAGERERGGGHRGPREERDSEFVDKLVHINRVAKVVKGGKRFGFAALVVIGDQKGRVGFGHGKAREVPEAIRKATESAKRNLTRVPLREGRTLHHDIAGRHGAGRVYLRAAPAGTGIIAGGPMRAVFETLGIQDVVAKSIGSSNPYNMVRATFDALKHQDSPRSVAARRNLKVSTLQSRRVGGDAEVVAE.

Residues 22–85 (FVDKLVHINR…ESAKRNLTRV (64 aa)) form the S5 DRBM domain.

This sequence belongs to the universal ribosomal protein uS5 family. In terms of assembly, part of the 30S ribosomal subunit. Contacts proteins S4 and S8.

Its function is as follows. With S4 and S12 plays an important role in translational accuracy. In terms of biological role, located at the back of the 30S subunit body where it stabilizes the conformation of the head with respect to the body. The protein is Small ribosomal subunit protein uS5 of Rhodopseudomonas palustris (strain BisB18).